A 106-amino-acid polypeptide reads, in one-letter code: UPF0060 membrane protein RL1530 (106 aa).

The next 4 membrane-spanning stretches (helical) occupy residues 4–24, 30–50, 58–78, and 86–106; these read IIFAFAALFEIAGCFAFWAWL, VWWLAPGMVSLALFAWILTLV, TFAAYGGIYILASLLWLWLVE, and DIGGALICLAGASLILFAPRG.

Belongs to the UPF0060 family.

Its subcellular location is the cell inner membrane. This chain is UPF0060 membrane protein RL1530, found in Rhizobium johnstonii (strain DSM 114642 / LMG 32736 / 3841) (Rhizobium leguminosarum bv. viciae).